Here is a 278-residue protein sequence, read N- to C-terminus: Neuronal membrane glycoprotein M6-a (278 aa).

Position 1 is an N-acetylmethionine (M1). Residues 1 to 22 are Cytoplasmic-facing; it reads MEENMEEGQTQKGCFECCIKCL. The chain crosses the membrane as a helical span at residues 23-43; the sequence is GGIPYASLIATILLYAGVALF. The Extracellular segment spans residues 44–84; sequence CGCGHEALSGTVNILQTYFELARTAGDTLDVFTMIDIFKYV. A helical membrane pass occupies residues 85 to 105; that stretch reads IYGIAAAFFVYGILLMVEGFF. The Cytoplasmic portion of the chain corresponds to 106–127; the sequence is TTGAIKDLYGDFKITTCGRCVS. A helical membrane pass occupies residues 128 to 148; the sequence is AWFIMLTYLFMLAWLGVTAFT. The Extracellular portion of the chain corresponds to 149-213; it reads SLPVYMYFNV…STELNMTFHL (65 aa). N164 is a glycosylation site (N-linked (GlcNAc...) asparagine). C174 and C192 are disulfide-bonded. The N-linked (GlcNAc...) asparagine glycan is linked to N208. The helical transmembrane segment at 214 to 234 threads the bilayer; it reads FIVALAGAGAAVIAMVHYLMV. Residues 235–278 are Cytoplasmic-facing; it reads LSANWAYVKDACRMQKYEDIKSKEEQELHDIHSTRSKERLNAYT. S256 is subject to Phosphoserine. Position 278 is a phosphothreonine (T278).

It belongs to the myelin proteolipid protein family. In terms of assembly, interacts with OPRM1. Interacts with palmitoyltransferase ZDHHC17/HIP14; the interaction leads to palmitoylation of GPM6A. N-glycosylated. In terms of processing, palmitoylated by ZDHHC17/HIP14. Widely expressed in the CNS. Found especially in the granule cell layer of the cerebellum but not in the molecular layer or white matter. Expressed in the immature embryonic retina including the nerve fiber layer (NFL), inner plexiform layer (IPL), and outer plexiform layer (OPL). Weakly expressed in processes of Mueller glia cells.

It is found in the cell membrane. Its subcellular location is the cell projection. The protein localises to the axon. It localises to the growth cone. The protein resides in the dendritic spine. It is found in the filopodium. Its subcellular location is the neuron projection. In terms of biological role, involved in neuronal differentiation, including differentiation and migration of neuronal stem cells. Plays a role in neuronal plasticity and is involved in neurite and filopodia outgrowth, filopodia motility and probably synapse formation. Gpm6a-induced filopodia formation involves mitogen-activated protein kinase (MAPK) and Src signaling pathways. Conflictingly, PubMed:22162747 reports that induced cellular protrusions are simple membrane-wrapped tubules without actin or tubulin-based cytoskeletons and with Gpm6a gliding along membrane edges indicative for a function in actin-independent membrane deformation. May be involved in neuronal NGF-dependent Ca(2+) influx. May be involved in regulation of endocytosis and intracellular trafficking of G-protein-coupled receptors (GPCRs); enhances internalization and recycling of mu-type opioid receptor. This is Neuronal membrane glycoprotein M6-a (Gpm6a) from Mus musculus (Mouse).